The primary structure comprises 198 residues: MASQEIEQLASTLARLPGLGPRSARRAVLWLVKKRDTALPALLEALEGVQDRLVECDTCGNVDTQNPCGICADPRRDRKSICVVEDVADLWALDRARLFTGRYHVLGGKLSALDGVRPEDLNIANLLGRVEEGGIDEVVLAMNATLEGQTTSHYIAERLEEFPVRITQLAHGLPVGGELDYLDEGTLAQALRARRPVQ.

A C4-type zinc finger spans residues 56-71; the sequence is CDTCGNVDTQNPCGIC. A Toprim domain is found at 79 to 174; the sequence is KSICVVEDVA…RITQLAHGLP (96 aa).

Belongs to the RecR family.

May play a role in DNA repair. It seems to be involved in an RecBC-independent recombinational process of DNA repair. It may act with RecF and RecO. The chain is Recombination protein RecR from Erythrobacter litoralis (strain HTCC2594).